The primary structure comprises 506 residues: Maturase K (506 aa).

The protein belongs to the intron maturase 2 family. MatK subfamily.

Its subcellular location is the plastid. The protein resides in the chloroplast. Usually encoded in the trnK tRNA gene intron. Probably assists in splicing its own and other chloroplast group II introns. This Empetrum nigrum (Black crowberry) protein is Maturase K.